A 315-amino-acid chain; its full sequence is UDP-3-O-acyl-N-acetylglucosamine deacetylase (315 aa).

Residues His78, His235, and Asp239 each contribute to the Zn(2+) site. Residue His262 is the Proton donor of the active site.

Belongs to the LpxC family. The cofactor is Zn(2+).

The enzyme catalyses a UDP-3-O-[(3R)-3-hydroxyacyl]-N-acetyl-alpha-D-glucosamine + H2O = a UDP-3-O-[(3R)-3-hydroxyacyl]-alpha-D-glucosamine + acetate. It participates in glycolipid biosynthesis; lipid IV(A) biosynthesis; lipid IV(A) from (3R)-3-hydroxytetradecanoyl-[acyl-carrier-protein] and UDP-N-acetyl-alpha-D-glucosamine: step 2/6. Its function is as follows. Catalyzes the hydrolysis of UDP-3-O-myristoyl-N-acetylglucosamine to form UDP-3-O-myristoylglucosamine and acetate, the committed step in lipid A biosynthesis. In Syntrophus aciditrophicus (strain SB), this protein is UDP-3-O-acyl-N-acetylglucosamine deacetylase.